A 152-amino-acid chain; its full sequence is Large-conductance mechanosensitive channel (152 aa).

3 helical membrane passes run 21-41 (IDLA…DSLV), 44-64 (VVMP…NKFL), and 92-112 (GNFI…FWMV).

Belongs to the MscL family. As to quaternary structure, homopentamer.

It is found in the cell inner membrane. Channel that opens in response to stretch forces in the membrane lipid bilayer. May participate in the regulation of osmotic pressure changes within the cell. The polypeptide is Large-conductance mechanosensitive channel (Bordetella pertussis (strain Tohama I / ATCC BAA-589 / NCTC 13251)).